Consider the following 154-residue polypeptide: Ribosomal RNA-processing protein 14-N (154 aa).

A disordered region spans residues tryptophan 36–phenylalanine 154. A Phosphoserine modification is found at serine 80. Threonine 83 is modified (phosphothreonine). A compositionally biased stretch (basic and acidic residues) spans glutamine 105–glutamine 133. The span at lysine 140–phenylalanine 154 shows a compositional bias: basic residues.

This sequence belongs to the SURF6 family.

It is found in the nucleus. The protein localises to the nucleolus. In terms of biological role, involved in ribosome biogenesis and cell polarity. Required for the synthesis of both 40S and 60S ribosomal subunits and may also play some direct role in correct positioning of the mitotic spindle during mitosis. The protein is Ribosomal RNA-processing protein 14-N (rrp14n) of Schizosaccharomyces pombe (strain 972 / ATCC 24843) (Fission yeast).